A 149-amino-acid polypeptide reads, in one-letter code: Macrodomain Ter protein (149 aa).

The protein belongs to the MatP family. Homodimer.

The protein localises to the cytoplasm. Required for spatial organization of the terminus region of the chromosome (Ter macrodomain) during the cell cycle. Prevents early segregation of duplicated Ter macrodomains during cell division. Binds specifically to matS, which is a 13 bp signature motif repeated within the Ter macrodomain. In Vibrio cholerae serotype O1 (strain ATCC 39315 / El Tor Inaba N16961), this protein is Macrodomain Ter protein.